We begin with the raw amino-acid sequence, 88 residues long: Apolipoprotein C-I (88 aa).

Positions 1–26 (MRLFIALPVLIVVVAMALEGPAPAQA) are cleaved as a signal peptide.

It belongs to the apolipoprotein C1 family.

The protein resides in the secreted. In terms of biological role, inhibitor of lipoprotein binding to the low density lipoprotein (LDL) receptor, LDL receptor-related protein, and very low density lipoprotein (VLDL) receptor. Associates with high density lipoproteins (HDL) and the triacylglycerol-rich lipoproteins in the plasma and makes up about 10% of the protein of the VLDL and 2% of that of HDL. Appears to interfere directly with fatty acid uptake and is also the major plasma inhibitor of cholesteryl ester transfer protein (CETP). Binds free fatty acids and reduces their intracellular esterification. Modulates the interaction of APOE with beta-migrating VLDL and inhibits binding of beta-VLDL to the LDL receptor-related protein. This is Apolipoprotein C-I (Apoc1) from Rattus norvegicus (Rat).